Here is a 185-residue protein sequence, read N- to C-terminus: Probable RNA 2'-phosphotransferase (185 aa).

Belongs to the KptA/TPT1 family.

Functionally, removes the 2'-phosphate from RNA via an intermediate in which the phosphate is ADP-ribosylated by NAD followed by a presumed transesterification to release the RNA and generate ADP-ribose 1''-2''-cyclic phosphate (APPR&gt;P). May function as an ADP-ribosylase. The sequence is that of Probable RNA 2'-phosphotransferase from Bacillus thuringiensis subsp. konkukian (strain 97-27).